A 372-amino-acid polypeptide reads, in one-letter code: NAD(P)H-quinone oxidoreductase subunit 1 (372 aa).

The next 8 membrane-spanning stretches (helical) occupy residues 27–47 (IIWLPLPMLLVLVAAVVGVLV), 97–117 (ILFTAGPILVLVPVILSWLIV), 128–148 (VGIGIFLWIALSSIQPIGLLM), 176–196 (LALSVLAIVLMTNSLSTIDIV), 204–224 (ILSWNIWRQPVGFIVFWICAL), 266–286 (ILSALLVSILYLGGWGFPIPV), 308–328 (SIGIVMTVLKAYLLVFIAILL), and 347–367 (FLLPISLANLLITAGLKLAFP).

The protein belongs to the complex I subunit 1 family. NDH-1 is composed of at least 11 different subunits.

It localises to the cellular thylakoid membrane. It catalyses the reaction a plastoquinone + NADH + (n+1) H(+)(in) = a plastoquinol + NAD(+) + n H(+)(out). It carries out the reaction a plastoquinone + NADPH + (n+1) H(+)(in) = a plastoquinol + NADP(+) + n H(+)(out). Functionally, NDH-1 shuttles electrons from an unknown electron donor, via FMN and iron-sulfur (Fe-S) centers, to quinones in the respiratory and/or the photosynthetic chain. The immediate electron acceptor for the enzyme in this species is believed to be plastoquinone. Couples the redox reaction to proton translocation, and thus conserves the redox energy in a proton gradient. In Prochlorococcus marinus (strain MIT 9215), this protein is NAD(P)H-quinone oxidoreductase subunit 1.